The chain runs to 108 residues: Peptidyl-prolyl cis-trans isomerase FKBP1B (108 aa).

In terms of domain architecture, PPIase FKBP-type spans 20–108 (GQTCVVHYTG…IFDVELLNLE (89 aa)).

As to quaternary structure, identified in a complex composed of RYR2, FKBP1B, PKA catalytic subunit, PRKAR2A, AKAP6, and the protein phosphatases PP2A and PP1. Interacts directly with RYR2.

The protein localises to the cytoplasm. Its subcellular location is the sarcoplasmic reticulum. It catalyses the reaction [protein]-peptidylproline (omega=180) = [protein]-peptidylproline (omega=0). With respect to regulation, inhibited by both FK506 and rapamycin. Its function is as follows. Has the potential to contribute to the immunosuppressive and toxic effects of FK506 and rapamycin. PPIases accelerate the folding of proteins. It catalyzes the cis-trans isomerization of proline imidic peptide bonds in oligopeptides. This is Peptidyl-prolyl cis-trans isomerase FKBP1B (FKBP1B) from Bos taurus (Bovine).